Here is a 180-residue protein sequence, read N- to C-terminus: Beta-lactoglobulin (180 aa).

An N-terminal signal peptide occupies residues 1-18 (MKCLLLALGLALACAAQA). 3 disulfides stabilise this stretch: C84–C178, C124–C137, and C124–C139.

The protein belongs to the calycin superfamily. Lipocalin family. Under physiological conditions beta-lactoglobulin exists as an equilibrium mixture of monomeric and dimeric forms. Interaction with LMBR1L is controversial. In terms of processing, alternate disulfide bonds occur in equal amounts. As to expression, synthesized in mammary gland and secreted in milk.

The protein resides in the secreted. Functionally, primary component of whey, it binds retinol and is probably involved in the transport of that molecule. The sequence is that of Beta-lactoglobulin (LGB) from Bubalus bubalis (Domestic water buffalo).